The chain runs to 415 residues: Acrosin (415 aa).

An N-terminal signal peptide occupies residues 1 to 16; that stretch reads MLPTAVLLVLAVSVAA. An N-linked (GlcNAc...) asparagine glycan is attached at Asn19. Cystine bridges form between Cys22–Cys152, Cys26–Cys160, Cys71–Cys87, Cys175–Cys244, Cys207–Cys223, and Cys234–Cys264. Residues 40-288 form the Peptidase S1 domain; sequence VVGGMSAEPG…YLNWIASKIG (249 aa). Residues His86 and Asp140 each act as charge relay system in the active site. An N-linked (GlcNAc...) asparagine glycan is attached at Asn208. Catalysis depends on Ser238, which acts as the Charge relay system. Disordered regions lie at residues 296 to 376 and 395 to 415; these read QLGT…PPQA and FSSG…LPAS. Composition is skewed to pro residues over residues 300–312 and 328–367; these read PPRP…PVRP and PPGP…PPPQ. A propeptide spans 339–415 (pro-rich); sequence PRPPAPPPAP…TTDLQELPAS (77 aa). Residues 395–409 are compositionally biased toward polar residues; it reads FSSGRSYYETETTDL.

It belongs to the peptidase S1 family. Heavy chain (catalytic) and a light chain linked by two disulfide bonds. Forms a heterodimer with SERPINA5.

It catalyses the reaction Preferential cleavage: Arg-|-Xaa, Lys-|-Xaa.. Inhibited by SERPINA5. Its function is as follows. Acrosin is the major protease of mammalian spermatozoa. It is a serine protease of trypsin-like cleavage specificity, it is synthesized in a zymogen form, proacrosin and stored in the acrosome. The chain is Acrosin (ACR) from Sus scrofa (Pig).